The following is a 491-amino-acid chain: Glycogen synthase (491 aa).

Lysine 15 lines the ADP-alpha-D-glucose pocket.

Belongs to the glycosyltransferase 1 family. Bacterial/plant glycogen synthase subfamily.

It catalyses the reaction [(1-&gt;4)-alpha-D-glucosyl](n) + ADP-alpha-D-glucose = [(1-&gt;4)-alpha-D-glucosyl](n+1) + ADP + H(+). Its pathway is glycan biosynthesis; glycogen biosynthesis. Synthesizes alpha-1,4-glucan chains using ADP-glucose. This chain is Glycogen synthase, found in Treponema denticola (strain ATCC 35405 / DSM 14222 / CIP 103919 / JCM 8153 / KCTC 15104).